Reading from the N-terminus, the 156-residue chain is Small ribosomal subunit protein uS7c (156 aa).

The protein belongs to the universal ribosomal protein uS7 family. As to quaternary structure, part of the 30S ribosomal subunit.

Its subcellular location is the plastid. The protein resides in the chloroplast. Its function is as follows. One of the primary rRNA binding proteins, it binds directly to 16S rRNA where it nucleates assembly of the head domain of the 30S subunit. The sequence is that of Small ribosomal subunit protein uS7c (rps7) from Chara vulgaris (Common stonewort).